We begin with the raw amino-acid sequence, 285 residues long: RNA 5'-monophosphate methyltransferase (285 aa).

The interval 1–28 is disordered; sequence MAATQELSKGGVEEAVEEDDPAALKPGA. Residues R46, N77, D111, 136–137, and M165 each bind S-adenosyl-L-methionine; that span reads DI. The Bin3-type SAM domain occupies 53–275; that stretch reads ELLRQLFPPE…KHTEETQAIP (223 aa).

Belongs to the methyltransferase superfamily. In terms of assembly, interacts with DICER1; the interaction may be mediated by RNA.

The protein localises to the cytoplasm. The catalysed reaction is a 5'-end 5'-phospho-ribonucleoside-RNA + S-adenosyl-L-methionine = a 5'-end (5'-methylphospho)-ribonucleoside-RNA + S-adenosyl-L-homocysteine. It carries out the reaction a 5'-end 5'-phospho-ribonucleoside-RNA + 2 S-adenosyl-L-methionine = a 5'-end (5'-bismethylphospho)-ribonucleoside-RNA + 2 S-adenosyl-L-homocysteine. Its function is as follows. O-methyltransferase that specifically monomethylates 5'-monophosphate of cytoplasmic histidyl tRNA (tRNA(His)), acting as a capping enzyme by protecting tRNA(His) from cleavage by DICER1. Also able, with less efficiently, to methylate the 5' monophosphate of a subset of pre-miRNAs, acting as a negative regulator of miRNA processing. The 5' monophosphate of pre-miRNAs is recognized by DICER1 and is required for pre-miRNAs processing: methylation at this position reduces the processing of pre-miRNAs by DICER1. Was also reported to mediate dimethylation of pre-miR-145; however dimethylation cannot be reproduced by another group which observes a monomethylation of pre-miR-145. The sequence is that of RNA 5'-monophosphate methyltransferase from Rattus norvegicus (Rat).